The following is an 874-amino-acid chain: ATP-dependent RNA helicase DDX54 (874 aa).

A disordered region spans residues 1-76 (MAAGRRVGPG…FPTSECVSDV (76 aa)). Residues 20-30 (WKKKRLRKRRT) show a composition bias toward basic residues. Residue Thr-30 is modified to Phosphothreonine. Ser-33, Ser-38, Ser-40, and Ser-74 each carry phosphoserine. Acidic residues predominate over residues 39 to 50 (DSDDGEFEIQAE). The Q motif signature appears at 95-123 (GGFQSMGLSYPVFKGIMKKGYKVPTPIQR). One can recognise a Helicase ATP-binding domain in the interval 126–298 (IPVILDGKDV…RAGLTEPVLI (173 aa)). Position 139–146 (139–146 (ARTGSGKT)) interacts with ATP. Residues 246–249 (DEAD) carry the DEAD box motif. Residues 328–472 (YLLQNVVRPQ…ARPCEEPSVA (145 aa)) form the Helicase C-terminal domain. Over residues 581 to 590 (ASSKDPSSQM) the composition is skewed to polar residues. The tract at residues 581-687 (ASSKDPSSQM…PKDFDSERGL (107 aa)) is disordered. Over residues 636-645 (TVEGVFTEVV) the composition is skewed to low complexity. The segment covering 664–685 (ETRQRDQEFYVPYRPKDFDSER) has biased composition (basic and acidic residues). 2 positions are modified to phosphoserine: Ser-688 and Ser-690. The disordered stretch occupies residues 712–874 (AQNMSRGQQQ…SRKGKMRKRM (163 aa)). The segment covering 713–722 (QNMSRGQQQL) has biased composition (polar residues). Composition is skewed to basic and acidic residues over residues 737-747 (QEDKKKIKTES) and 755-771 (YKRDLYQKWKQKQKIDD). Phosphoserine occurs at positions 774 and 780. Over residues 812-823 (MRSELKTKEQIL) the composition is skewed to basic and acidic residues. Basic residues predominate over residues 864–874 (PSRKGKMRKRM).

The protein belongs to the DEAD box helicase family. DDX54/DBP10 subfamily. In terms of assembly, interacts in a hormone-dependent manner with nuclear receptors.

The protein localises to the nucleus. The protein resides in the nucleolus. It catalyses the reaction ATP + H2O = ADP + phosphate + H(+). Functionally, has RNA-dependent ATPase activity. Represses the transcriptional activity of nuclear receptors. This Mus musculus (Mouse) protein is ATP-dependent RNA helicase DDX54 (Ddx54).